The sequence spans 315 residues: Acyl transferase (315 aa).

Catalysis depends on charge relay system residues S116, D213, and H243.

Belongs to the LuxD family.

Its pathway is lipid metabolism; fatty acid reduction for biolumincescence. Acyl transferase is part of the fatty acid reductase system required for aldehyde biosynthesis; it produces fatty acids for the luminescent reaction. This Photobacterium leiognathi protein is Acyl transferase.